A 183-amino-acid polypeptide reads, in one-letter code: Large ribosomal subunit protein bL32m (183 aa).

Zn(2+)-binding residues include C99, C102, C112, and C115.

This sequence belongs to the bacterial ribosomal protein bL32 family. Component of the mitochondrial large ribosomal subunit (mt-LSU).

The protein localises to the mitochondrion. Its function is as follows. Component of the mitochondrial large ribosomal subunit (mt-LSU). The mitochondrial ribosome (mitoribosome) is a large ribonucleoprotein complex responsible for the synthesis of proteins inside mitochondria. The protein is Large ribosomal subunit protein bL32m (mrpl-32) of Caenorhabditis elegans.